We begin with the raw amino-acid sequence, 98 residues long: NADH-ubiquinone oxidoreductase chain 4L (98 aa).

3 consecutive transmembrane segments (helical) span residues 2–22 (TSAF…TFMF), 26–46 (LMST…MTST), and 59–79 (IPIT…ALLV).

This sequence belongs to the complex I subunit 4L family. As to quaternary structure, core subunit of respiratory chain NADH dehydrogenase (Complex I) which is composed of 45 different subunits.

It is found in the mitochondrion inner membrane. It catalyses the reaction a ubiquinone + NADH + 5 H(+)(in) = a ubiquinol + NAD(+) + 4 H(+)(out). Its function is as follows. Core subunit of the mitochondrial membrane respiratory chain NADH dehydrogenase (Complex I) which catalyzes electron transfer from NADH through the respiratory chain, using ubiquinone as an electron acceptor. Part of the enzyme membrane arm which is embedded in the lipid bilayer and involved in proton translocation. The sequence is that of NADH-ubiquinone oxidoreductase chain 4L from Rattus norvegicus (Rat).